The sequence spans 317 residues: Methionyl-tRNA formyltransferase (317 aa).

(6S)-5,6,7,8-tetrahydrofolate is bound at residue 110-113; that stretch reads SLLP. A disordered region spans residues 292–317; the sequence is RMKGEDFVRGKNVQPGDVLGEANEEN.

This sequence belongs to the Fmt family.

It carries out the reaction L-methionyl-tRNA(fMet) + (6R)-10-formyltetrahydrofolate = N-formyl-L-methionyl-tRNA(fMet) + (6S)-5,6,7,8-tetrahydrofolate + H(+). In terms of biological role, attaches a formyl group to the free amino group of methionyl-tRNA(fMet). The formyl group appears to play a dual role in the initiator identity of N-formylmethionyl-tRNA by promoting its recognition by IF2 and preventing the misappropriation of this tRNA by the elongation apparatus. The chain is Methionyl-tRNA formyltransferase from Bacillus velezensis (strain DSM 23117 / BGSC 10A6 / LMG 26770 / FZB42) (Bacillus amyloliquefaciens subsp. plantarum).